The primary structure comprises 237 residues: Tyrosine-protein kinase YwqD (237 aa).

Tyr-228 is modified (phosphotyrosine; by autocatalysis).

It belongs to the CpsD/CapB family. Autophosphorylated in vitro, which inhibits ATPase activity. Dephosphorylated by YwqE in vitro.

It carries out the reaction L-tyrosyl-[protein] + ATP = O-phospho-L-tyrosyl-[protein] + ADP + H(+). Functionally, may be involved in the regulation of capsular polysaccharide biosynthesis. Autophosphorylates in vitro. Phosphorylates and activates in vitro two UDP-glucose dehydrogenases, YwqF and TuaD, as well as the DNA-binding proteins Ssb and SsbB. In Bacillus subtilis (strain 168), this protein is Tyrosine-protein kinase YwqD (ywqD).